The sequence spans 257 residues: Aspartate/glutamate leucyltransferase (257 aa).

This sequence belongs to the R-transferase family. Bpt subfamily.

The protein resides in the cytoplasm. It carries out the reaction N-terminal L-glutamyl-[protein] + L-leucyl-tRNA(Leu) = N-terminal L-leucyl-L-glutamyl-[protein] + tRNA(Leu) + H(+). The enzyme catalyses N-terminal L-aspartyl-[protein] + L-leucyl-tRNA(Leu) = N-terminal L-leucyl-L-aspartyl-[protein] + tRNA(Leu) + H(+). In terms of biological role, functions in the N-end rule pathway of protein degradation where it conjugates Leu from its aminoacyl-tRNA to the N-termini of proteins containing an N-terminal aspartate or glutamate. This is Aspartate/glutamate leucyltransferase from Rhodopseudomonas palustris (strain HaA2).